The chain runs to 729 residues: Zorya protein ZorA (729 aa).

A run of 3 helical transmembrane segments spans residues 20–40 (PATVIGLVSFAFLCFIFFYFF), 135–155 (LPGILTGVGIIGTFYGLMIGL), and 177–197 (VLYAFLGSAFAITFSILITWL).

It belongs to the MotA family.

The protein localises to the cell inner membrane. In terms of biological role, component of antiviral defense system Zorya type I, composed of ZorA, ZorB, ZorC and ZorD. Expression of Zorya type I in E.coli (strain MG1655) confers 10,000-fold resistance to phage SECphi27, 100-fold resistance to lambda, and 10-fold resistance to T7. While most T7 infected Zorya-containing cells undergo abortive infection, a minority produce viable phage progeny. These eventually accumulate to a high multiplicity of infection, leading to culture collapse by 2 hours after initial infection. ZorA and ZorB probably assemble in the cell inner membrane and exert their effect there. This Escherichia coli O139:H28 (strain E24377A / ETEC) protein is Zorya protein ZorA.